Consider the following 125-residue polypeptide: Acidic phospholipase A2 5 (125 aa).

Residue serine 1 is a signal peptide. Residues 2–7 (NRPMPL) constitute a propeptide that is removed on maturation. 8 disulfides stabilise this stretch: cysteine 18–cysteine 77, cysteine 33–cysteine 124, cysteine 35–cysteine 50, cysteine 37–cysteine 54, cysteine 49–cysteine 105, cysteine 56–cysteine 98, cysteine 66–cysteine 91, and cysteine 84–cysteine 96. Residue phenylalanine 28 coordinates N-acetyl-beta-D-glucosamine. Aspartate 30 serves as a coordination point for Zn(2+). The Ca(2+) site is built by tyrosine 34 and glycine 36. N-acetyl-beta-D-glucosamine-binding residues include histidine 53 and lysine 69. Histidine 53 is an active-site residue. Glutamate 76 is a binding site for Zn(2+). The active site involves aspartate 99. Position 117 (asparagine 117) interacts with Zn(2+).

As to quaternary structure, heterodimer formed between isoform 5 and isoform 6 in presence of zinc ion and monomer in absence of zinc ion. The cofactor is Ca(2+). Expressed by the venom gland.

It is found in the secreted. It catalyses the reaction a 1,2-diacyl-sn-glycero-3-phosphocholine + H2O = a 1-acyl-sn-glycero-3-phosphocholine + a fatty acid + H(+). Its function is as follows. PLA2 catalyzes the calcium-dependent hydrolysis of the 2-acyl groups in 3-sn-phosphoglycerides. The chain is Acidic phospholipase A2 5 from Naja sagittifera (Andaman cobra).